The chain runs to 490 residues: Cytochrome P450 monooxygenase anuE (490 aa).

Cysteine 405 is a heme binding site.

This sequence belongs to the cytochrome P450 family. The cofactor is heme.

It carries out the reaction 2-hydroxymethyl-3-pentylphenol + reduced [NADPH--hemoprotein reductase] + O2 = (8S)-annullatin E + oxidized [NADPH--hemoprotein reductase] + H2O + H(+). The protein operates within secondary metabolite biosynthesis. In terms of biological role, cytochrome P450 monooxygenase; part of the gene cluster that mediates the biosynthesis of annullatin D, an alkylated aromatic polyketide with a fused dihydrobenzofuran lactone ring system that exhibits potent agonistic activities toward the cannabinoid receptors. Within the pathway, anuE catalyzes the hydroxylation of 2-hydroxymethyl-3-pentylphenol at the side chain to produce (8S)-annullatin E. The annullatin backbone 2-hydroxymethyl-3-pentylphenol is assembled from one acetyl-CoA starter unit and 5 malonyl-CoA elongation units by cooperation of the highly reducing polyketide synthase anuA, the short-chain dehydrogenase anuB and the oxidoreductase anuC, before being hydroxylated at the C-5 alkyl chain by the cytochrome P450 monooxygenase anuE to form (8S)-annullatin E. The prenyltransferase anuH subsequently installs one isoprenyl group at the benzene ring to form (8S)-annullatin J. Enzymatic or nonenzymatic dihydro-benzofuran ring formation between the prenyl and the phenolic hydroxyl groups in (8S)-annullatin J results in two diastereomers (2S,9S)-annullatin H and compound 12. The intermediate (2S,9S)-annullatin H is then converted to (2S,9S)-annullatin D by the FAD-linked oxidoreductase anuG-catalyzed five-member lactone ring formation. The isomer 12 acts as a substrate for the short-chain dehydrogenase anuF and is oxidized to (2R)-annullatin F, which is subsequently acetylated by an acetyltransferase leading to (2R)-annullatin G formation. The remaining enzymes identified within the cluster, anuD, anuI and anuJ, seem not to be involved in annullatin biosynthesis. This Penicillium roqueforti (strain FM164) protein is Cytochrome P450 monooxygenase anuE.